The chain runs to 93 residues: Small ribosomal subunit protein uS19 (93 aa).

This sequence belongs to the universal ribosomal protein uS19 family.

Its function is as follows. Protein S19 forms a complex with S13 that binds strongly to the 16S ribosomal RNA. The sequence is that of Small ribosomal subunit protein uS19 from Mycobacterium sp. (strain JLS).